A 450-amino-acid chain; its full sequence is Tubulin alpha chain (450 aa).

Gln-11 lines the GTP pocket. Lys-40 is modified (N6-acetyllysine). Residues Glu-71, Ser-140, Gly-144, Thr-145, Thr-179, Asn-206, and Asn-228 each coordinate GTP. Position 71 (Glu-71) interacts with Mg(2+). Residue Glu-254 is part of the active site.

The protein belongs to the tubulin family. Dimer of alpha and beta chains. A typical microtubule is a hollow water-filled tube with an outer diameter of 25 nm and an inner diameter of 15 nM. Alpha-beta heterodimers associate head-to-tail to form protofilaments running lengthwise along the microtubule wall with the beta-tubulin subunit facing the microtubule plus end conferring a structural polarity. Microtubules usually have 13 protofilaments but different protofilament numbers can be found in some organisms and specialized cells. Mg(2+) serves as cofactor. Post-translationally, undergoes a tyrosination/detyrosination cycle, the cyclic removal and re-addition of a C-terminal tyrosine residue by the enzymes tubulin tyrosine carboxypeptidase (TTCP) and tubulin tyrosine ligase (TTL), respectively. Acetylation of alpha chains at Lys-40 stabilizes microtubules and affects affinity and processivity of microtubule motors. This modification has a role in multiple cellular functions, ranging from cell motility, cell cycle progression or cell differentiation to intracellular trafficking and signaling.

It is found in the cytoplasm. It localises to the cytoskeleton. It catalyses the reaction GTP + H2O = GDP + phosphate + H(+). In terms of biological role, tubulin is the major constituent of microtubules, a cylinder consisting of laterally associated linear protofilaments composed of alpha- and beta-tubulin heterodimers. Microtubules grow by the addition of GTP-tubulin dimers to the microtubule end, where a stabilizing cap forms. Below the cap, tubulin dimers are in GDP-bound state, owing to GTPase activity of alpha-tubulin. This is Tubulin alpha chain from Lepidoglyphus destructor (Storage mite).